The chain runs to 142 residues: Large ribosomal subunit protein uL11 (142 aa).

It belongs to the universal ribosomal protein uL11 family. In terms of assembly, part of the ribosomal stalk of the 50S ribosomal subunit. Interacts with L10 and the large rRNA to form the base of the stalk. L10 forms an elongated spine to which L12 dimers bind in a sequential fashion forming a multimeric L10(L12)X complex. One or more lysine residues are methylated.

Forms part of the ribosomal stalk which helps the ribosome interact with GTP-bound translation factors. This is Large ribosomal subunit protein uL11 from Mannheimia succiniciproducens (strain KCTC 0769BP / MBEL55E).